The chain runs to 144 residues: MELNNLKPAEGAKHAKRRVGRGIGSGLGKTAGRGHKGQKSRSGGFHKVGFEGGQMPLQRRLPKRGFTSLTKEFVGEVRLGDLEKLPVDEIDLLALKQAGLVGELIKSAKIIATGELKRKIVVKGLGATKGARAAIEAAGGSFAE.

Positions 1–56 (MELNNLKPAEGAKHAKRRVGRGIGSGLGKTAGRGHKGQKSRSGGFHKVGFEGGQMP) are disordered. The span at 21-31 (RGIGSGLGKTA) shows a compositional bias: gly residues.

The protein belongs to the universal ribosomal protein uL15 family. Part of the 50S ribosomal subunit.

In terms of biological role, binds to the 23S rRNA. This is Large ribosomal subunit protein uL15 from Burkholderia mallei (strain NCTC 10247).